Reading from the N-terminus, the 127-residue chain is Small ribosomal subunit protein bS16 (127 aa).

The disordered stretch occupies residues 80 to 127; the sequence is GLKKRPTRNNPHKGEPGKKAQERIAAAKQAAEEAAAAKTESAPISEEV. The span at 81–90 shows a compositional bias: basic residues; it reads LKKRPTRNNP. Residues 91-101 are compositionally biased toward basic and acidic residues; it reads HKGEPGKKAQE. Residues 102–121 are compositionally biased toward low complexity; that stretch reads RIAAAKQAAEEAAAAKTESA.

This sequence belongs to the bacterial ribosomal protein bS16 family.

The sequence is that of Small ribosomal subunit protein bS16 from Bartonella henselae (strain ATCC 49882 / DSM 28221 / CCUG 30454 / Houston 1) (Rochalimaea henselae).